Consider the following 264-residue polypeptide: MPELPEVETVVRSLAPLVGRRIATAEFRNLRILRGGDPDLMSARLAGRKILSIKRYGKFIVAVIEGGGHLMIHLGMTGKLLLGGPSGKHTHAVLTFDRGTLLFDDSRQFGCIEYSEEFPKRVARLGPEPMEISFEDFAADLKRRKTRIKSLLLNQTFIRGVGNIYADEALFRAGIHPQALTSRIRIERARKLYDAIGEVLTEAIEAGGSSISDYVDAEGRSGFFQFSHRVYQRTGEPCLNCKTPIRRVIVTQRSSHFCPHCQKR.

The active-site Schiff-base intermediate with DNA is the proline 2. Residue glutamate 3 is the Proton donor of the active site. The active-site Proton donor; for beta-elimination activity is the lysine 58. Histidine 89, arginine 107, and arginine 144 together coordinate DNA. The segment at 229–263 (RVYQRTGEPCLNCKTPIRRVIVTQRSSHFCPHCQK) adopts an FPG-type zinc-finger fold. Arginine 253 acts as the Proton donor; for delta-elimination activity in catalysis.

It belongs to the FPG family. Monomer. Requires Zn(2+) as cofactor.

The enzyme catalyses Hydrolysis of DNA containing ring-opened 7-methylguanine residues, releasing 2,6-diamino-4-hydroxy-5-(N-methyl)formamidopyrimidine.. It catalyses the reaction 2'-deoxyribonucleotide-(2'-deoxyribose 5'-phosphate)-2'-deoxyribonucleotide-DNA = a 3'-end 2'-deoxyribonucleotide-(2,3-dehydro-2,3-deoxyribose 5'-phosphate)-DNA + a 5'-end 5'-phospho-2'-deoxyribonucleoside-DNA + H(+). Functionally, involved in base excision repair of DNA damaged by oxidation or by mutagenic agents. Acts as a DNA glycosylase that recognizes and removes damaged bases. Has a preference for oxidized purines, such as 7,8-dihydro-8-oxoguanine (8-oxoG). Has AP (apurinic/apyrimidinic) lyase activity and introduces nicks in the DNA strand. Cleaves the DNA backbone by beta-delta elimination to generate a single-strand break at the site of the removed base with both 3'- and 5'-phosphates. The polypeptide is Formamidopyrimidine-DNA glycosylase (Solibacter usitatus (strain Ellin6076)).